The sequence spans 488 residues: Inosine-5'-monophosphate dehydrogenase (488 aa).

CBS domains follow at residues 93 to 149 and 153 to 214; these read VVTD…NQPV and MTPK…CKDE. Residues Asp248 and 248–250 each bind NAD(+); that span reads DSS. The residue at position 267 (Lys267) is an N6-acetyllysine. Residue 298 to 300 coordinates NAD(+); the sequence is GIG. K(+)-binding residues include Gly300 and Gly302. Ser303 serves as a coordination point for IMP. Cys305 is a binding site for K(+). Cys305 acts as the Thioimidate intermediate in catalysis. Residues 338 to 340, 361 to 362, and 385 to 389 each bind IMP; these read DGG, GS, and YRGMG. The Proton acceptor role is filled by Arg401. Residue Glu415 participates in IMP binding. Lys428 bears the N6-acetyllysine mark. The K(+) site is built by Glu469, Ser470, and His471.

This sequence belongs to the IMPDH/GMPR family. Homotetramer. The cofactor is K(+).

The catalysed reaction is IMP + NAD(+) + H2O = XMP + NADH + H(+). The protein operates within purine metabolism; XMP biosynthesis via de novo pathway; XMP from IMP: step 1/1. With respect to regulation, mycophenolic acid (MPA) is a non-competitive inhibitor that prevents formation of the closed enzyme conformation by binding to the same site as the amobile flap. In contrast, mizoribine monophosphate (MZP) is a competitive inhibitor that induces the closed conformation. MPA is a potent inhibitor of mammalian IMPDHs but a poor inhibitor of the bacterial enzymes. MZP is a more potent inhibitor of bacterial IMPDH. Catalyzes the conversion of inosine 5'-phosphate (IMP) to xanthosine 5'-phosphate (XMP), the first committed and rate-limiting step in the de novo synthesis of guanine nucleotides, and therefore plays an important role in the regulation of cell growth. The polypeptide is Inosine-5'-monophosphate dehydrogenase (Escherichia coli O157:H7).